The sequence spans 489 residues: Transcription factor TGAL11 (489 aa).

Residues 87–99 (AATATATARPPAT) show a composition bias toward low complexity. A disordered region spans residues 87-181 (AATATATARP…SDHRMTKTLD (95 aa)). Over residues 121 to 139 (SNVTADTTDSESSSKNNGD) the composition is skewed to polar residues. Residues 148–159 (ASQFDQIPQQQQ) show a composition bias toward low complexity. Positions 171 to 181 (HSDHRMTKTLD) are enriched in basic and acidic residues. Residues 181–225 (DPKIMRRLAQNREAARKSRLRKKAYIQQLESSKLRLAQMEQDLER) form the bZIP domain. The interval 183-203 (KIMRRLAQNREAARKSRLRKK) is basic motif. Residues 209-223 (LESSKLRLAQMEQDL) form a leucine-zipper region. Residues 245 to 460 (AAMFDAEYGR…RALSSLWASR (216 aa)) form the DOG1 domain.

This sequence belongs to the bZIP family.

It localises to the nucleus. Transcriptional regulator involved in defense response. The sequence is that of Transcription factor TGAL11 from Oryza sativa subsp. japonica (Rice).